Here is a 502-residue protein sequence, read N- to C-terminus: Glycerol kinase (502 aa).

T16 is an ADP binding site. The ATP site is built by T16, T17, and S18. T16 lines the sn-glycerol 3-phosphate pocket. Residue R20 coordinates ADP. Sn-glycerol 3-phosphate is bound by residues R86, E87, Y138, and D247. R86, E87, Y138, D247, and Q248 together coordinate glycerol. Residues T269 and G312 each coordinate ADP. The ATP site is built by T269, G312, Q316, and G413. ADP contacts are provided by G413 and N417.

Belongs to the FGGY kinase family.

It carries out the reaction glycerol + ATP = sn-glycerol 3-phosphate + ADP + H(+). Its pathway is polyol metabolism; glycerol degradation via glycerol kinase pathway; sn-glycerol 3-phosphate from glycerol: step 1/1. Inhibited by fructose 1,6-bisphosphate (FBP). Key enzyme in the regulation of glycerol uptake and metabolism. Catalyzes the phosphorylation of glycerol to yield sn-glycerol 3-phosphate. The chain is Glycerol kinase from Dechloromonas aromatica (strain RCB).